A 453-amino-acid chain; its full sequence is Bifunctional protein GlmU (453 aa).

Residues 1-228 (MPHWAAVIMA…VHEALGINSR (228 aa)) are pyrophosphorylase. UDP-N-acetyl-alpha-D-glucosamine-binding positions include K23, Q73, 78 to 79 (GT), 100 to 102 (SGD), G139, E153, N168, and N226. D102 is a Mg(2+) binding site. Residue N226 coordinates Mg(2+). A linker region spans residues 229 to 249 (AQLAAAEDVARQRILSYWMEE). The N-acetyltransferase stretch occupies residues 250–453 (GVTIIDPRST…IENWVRNKKK (204 aa)). UDP-N-acetyl-alpha-D-glucosamine-binding residues include R331 and K349. H361 (proton acceptor) is an active-site residue. Residues Y364 and N375 each coordinate UDP-N-acetyl-alpha-D-glucosamine. Acetyl-CoA contacts are provided by residues A378, 384–385 (NY), S403, A421, and R438.

This sequence in the N-terminal section; belongs to the N-acetylglucosamine-1-phosphate uridyltransferase family. The protein in the C-terminal section; belongs to the transferase hexapeptide repeat family. Homotrimer. Requires Mg(2+) as cofactor.

Its subcellular location is the cytoplasm. It carries out the reaction alpha-D-glucosamine 1-phosphate + acetyl-CoA = N-acetyl-alpha-D-glucosamine 1-phosphate + CoA + H(+). The enzyme catalyses N-acetyl-alpha-D-glucosamine 1-phosphate + UTP + H(+) = UDP-N-acetyl-alpha-D-glucosamine + diphosphate. It participates in nucleotide-sugar biosynthesis; UDP-N-acetyl-alpha-D-glucosamine biosynthesis; N-acetyl-alpha-D-glucosamine 1-phosphate from alpha-D-glucosamine 6-phosphate (route II): step 2/2. Its pathway is nucleotide-sugar biosynthesis; UDP-N-acetyl-alpha-D-glucosamine biosynthesis; UDP-N-acetyl-alpha-D-glucosamine from N-acetyl-alpha-D-glucosamine 1-phosphate: step 1/1. The protein operates within bacterial outer membrane biogenesis; LPS lipid A biosynthesis. Functionally, catalyzes the last two sequential reactions in the de novo biosynthetic pathway for UDP-N-acetylglucosamine (UDP-GlcNAc). The C-terminal domain catalyzes the transfer of acetyl group from acetyl coenzyme A to glucosamine-1-phosphate (GlcN-1-P) to produce N-acetylglucosamine-1-phosphate (GlcNAc-1-P), which is converted into UDP-GlcNAc by the transfer of uridine 5-monophosphate (from uridine 5-triphosphate), a reaction catalyzed by the N-terminal domain. This is Bifunctional protein GlmU from Desulfitobacterium hafniense (strain Y51).